The primary structure comprises 2184 residues: Chromodomain-helicase-DNA-binding protein 8 (2184 aa).

Disordered regions lie at residues 379–399 (VKTS…KQEK) and 419–527 (IPRV…KRKK). Residues 387–399 (ESRKLDSQKKQEK) are compositionally biased toward basic and acidic residues. The span at 425-437 (EDELPSVNPEDDD) shows a compositional bias: acidic residues. The span at 448–459 (GETSDRSKDEKP) shows a compositional bias: basic and acidic residues. Basic residues predominate over residues 516–527 (KRRSNRQVKRKK). 2 consecutive Chromo domains span residues 586-653 (AIVD…TQMQ) and 668-734 (VEVD…RVAR). The Helicase ATP-binding domain occupies 767–941 (LFNWYNRQNC…FSLLHFLEPT (175 aa)). 780-787 (DEMGLGKT) is a binding site for ATP. Positions 892 to 895 (DEAH) match the DEAH box motif. One can recognise a Helicase C-terminal domain in the interval 1081–1252 (LIDKLLPKLR…FTKKEIEDLL (172 aa)). Disordered stretches follow at residues 1907-1989 (GISG…EESR) and 2039-2076 (WSSP…PAPD). 2 stretches are compositionally biased toward low complexity: residues 1912-1961 (SRPS…SNSE) and 2040-2054 (SSPR…DSPD).

The protein belongs to the SNF2/RAD54 helicase family. CHD8 subfamily. In terms of assembly, component of some MLL1/MLL complex.

It localises to the nucleus. It catalyses the reaction ATP + H2O = ADP + phosphate + H(+). ATP-dependent chromatin-remodeling factor, it slides nucleosomes along DNA; nucleosome sliding requires ATP. Acts as a transcription repressor by remodeling chromatin structure and recruiting histone H1 to target genes. Suppresses p53/tp53-mediated apoptosis by recruiting histone H1 and preventing p53/tp53 transactivation activity. Acts as a negative regulator of Wnt signaling pathway by regulating beta-catenin (ctnnb1) activity. Negatively regulates ctnnb1-targeted gene expression by being recruited specifically to the promoter regions of several ctnnb1 responsive genes. May also act as a transcription activator by participating in efficient U6 RNA polymerase III transcription. The chain is Chromodomain-helicase-DNA-binding protein 8 from Xenopus tropicalis (Western clawed frog).